A 361-amino-acid chain; its full sequence is Beta-hexosaminidase (361 aa).

Residues D69, R77, R144, and 174 to 175 (KH) each bind substrate. H187 serves as the catalytic Proton donor/acceptor. The Nucleophile role is filled by D258.

The protein belongs to the glycosyl hydrolase 3 family. NagZ subfamily.

It localises to the cytoplasm. It catalyses the reaction Hydrolysis of terminal non-reducing N-acetyl-D-hexosamine residues in N-acetyl-beta-D-hexosaminides.. Its pathway is cell wall biogenesis; peptidoglycan recycling. Functionally, plays a role in peptidoglycan recycling by cleaving the terminal beta-1,4-linked N-acetylglucosamine (GlcNAc) from peptide-linked peptidoglycan fragments, giving rise to free GlcNAc, anhydro-N-acetylmuramic acid and anhydro-N-acetylmuramic acid-linked peptides. The sequence is that of Beta-hexosaminidase from Neisseria gonorrhoeae (strain NCCP11945).